The following is a 223-amino-acid chain: Deoxyribose-phosphate aldolase (223 aa).

Asp-92 serves as the catalytic Proton donor/acceptor. Lys-158 functions as the Schiff-base intermediate with acetaldehyde in the catalytic mechanism. Lys-188 acts as the Proton donor/acceptor in catalysis.

It belongs to the DeoC/FbaB aldolase family. DeoC type 1 subfamily.

The protein localises to the cytoplasm. It carries out the reaction 2-deoxy-D-ribose 5-phosphate = D-glyceraldehyde 3-phosphate + acetaldehyde. The protein operates within carbohydrate degradation; 2-deoxy-D-ribose 1-phosphate degradation; D-glyceraldehyde 3-phosphate and acetaldehyde from 2-deoxy-alpha-D-ribose 1-phosphate: step 2/2. Functionally, catalyzes a reversible aldol reaction between acetaldehyde and D-glyceraldehyde 3-phosphate to generate 2-deoxy-D-ribose 5-phosphate. The sequence is that of Deoxyribose-phosphate aldolase from Mycobacterium avium (strain 104).